A 331-amino-acid chain; its full sequence is Nucleotide-binding protein SGR_5570 (331 aa).

A disordered region spans residues 1–43 (MTENTHETAPNTADTDTADFDTADTDRADGAADVSTNTPNETG). Residue 55-62 (GMSGAGRS) participates in ATP binding. 106 to 109 (DVRG) is a GTP binding site.

This sequence belongs to the RapZ-like family.

In terms of biological role, displays ATPase and GTPase activities. The sequence is that of Nucleotide-binding protein SGR_5570 from Streptomyces griseus subsp. griseus (strain JCM 4626 / CBS 651.72 / NBRC 13350 / KCC S-0626 / ISP 5235).